A 711-amino-acid polypeptide reads, in one-letter code: Polyribonucleotide nucleotidyltransferase (711 aa).

The Mg(2+) site is built by Asp-490 and Asp-496. Residues 557-619 enclose the KH domain; sequence PRIETMTIPK…KCIDDAMRII (63 aa). Positions 629–699 constitute an S1 motif domain; that stretch reads GEVYVGKVRS…KTGKFKLSHK (71 aa).

Belongs to the polyribonucleotide nucleotidyltransferase family. Mg(2+) serves as cofactor.

The protein resides in the cytoplasm. The enzyme catalyses RNA(n+1) + phosphate = RNA(n) + a ribonucleoside 5'-diphosphate. Its function is as follows. Involved in mRNA degradation. Catalyzes the phosphorolysis of single-stranded polyribonucleotides processively in the 3'- to 5'-direction. This chain is Polyribonucleotide nucleotidyltransferase, found in Phocaeicola vulgatus (strain ATCC 8482 / DSM 1447 / JCM 5826 / CCUG 4940 / NBRC 14291 / NCTC 11154) (Bacteroides vulgatus).